A 228-amino-acid polypeptide reads, in one-letter code: Thiamine-phosphate synthase (228 aa).

Residues 57–61 (QLRDK) and N89 contribute to the 4-amino-2-methyl-5-(diphosphooxymethyl)pyrimidine site. Positions 90 and 109 each coordinate Mg(2+). S128 is a 4-amino-2-methyl-5-(diphosphooxymethyl)pyrimidine binding site. 154–156 (TPS) lines the 2-[(2R,5Z)-2-carboxy-4-methylthiazol-5(2H)-ylidene]ethyl phosphate pocket. Residue K157 participates in 4-amino-2-methyl-5-(diphosphooxymethyl)pyrimidine binding. 2-[(2R,5Z)-2-carboxy-4-methylthiazol-5(2H)-ylidene]ethyl phosphate-binding positions include G185 and 205–206 (IS).

The protein belongs to the thiamine-phosphate synthase family. Mg(2+) serves as cofactor.

It catalyses the reaction 2-[(2R,5Z)-2-carboxy-4-methylthiazol-5(2H)-ylidene]ethyl phosphate + 4-amino-2-methyl-5-(diphosphooxymethyl)pyrimidine + 2 H(+) = thiamine phosphate + CO2 + diphosphate. The catalysed reaction is 2-(2-carboxy-4-methylthiazol-5-yl)ethyl phosphate + 4-amino-2-methyl-5-(diphosphooxymethyl)pyrimidine + 2 H(+) = thiamine phosphate + CO2 + diphosphate. It carries out the reaction 4-methyl-5-(2-phosphooxyethyl)-thiazole + 4-amino-2-methyl-5-(diphosphooxymethyl)pyrimidine + H(+) = thiamine phosphate + diphosphate. The protein operates within cofactor biosynthesis; thiamine diphosphate biosynthesis; thiamine phosphate from 4-amino-2-methyl-5-diphosphomethylpyrimidine and 4-methyl-5-(2-phosphoethyl)-thiazole: step 1/1. Its function is as follows. Condenses 4-methyl-5-(beta-hydroxyethyl)thiazole monophosphate (THZ-P) and 2-methyl-4-amino-5-hydroxymethyl pyrimidine pyrophosphate (HMP-PP) to form thiamine monophosphate (TMP). The polypeptide is Thiamine-phosphate synthase (Roseiflexus castenholzii (strain DSM 13941 / HLO8)).